We begin with the raw amino-acid sequence, 238 residues long: Ribonuclease PH (238 aa).

Phosphate contacts are provided by residues Arg-86 and 124-126 (GTR).

The protein belongs to the RNase PH family. Homohexameric ring arranged as a trimer of dimers.

The catalysed reaction is tRNA(n+1) + phosphate = tRNA(n) + a ribonucleoside 5'-diphosphate. Functionally, phosphorolytic 3'-5' exoribonuclease that plays an important role in tRNA 3'-end maturation. Removes nucleotide residues following the 3'-CCA terminus of tRNAs; can also add nucleotides to the ends of RNA molecules by using nucleoside diphosphates as substrates, but this may not be physiologically important. Probably plays a role in initiation of 16S rRNA degradation (leading to ribosome degradation) during starvation. This chain is Ribonuclease PH, found in Chelativorans sp. (strain BNC1).